We begin with the raw amino-acid sequence, 341 residues long: Methionine import ATP-binding protein MetN (341 aa).

In terms of domain architecture, ABC transporter spans Ile-9–Phe-247. Gly-41–Ser-48 is a binding site for ATP.

Belongs to the ABC transporter superfamily. Methionine importer (TC 3.A.1.24) family. As to quaternary structure, the complex is composed of two ATP-binding proteins (MetN), two transmembrane proteins (MetI) and a solute-binding protein (MetQ).

The protein localises to the cell inner membrane. The catalysed reaction is L-methionine(out) + ATP + H2O = L-methionine(in) + ADP + phosphate + H(+). The enzyme catalyses D-methionine(out) + ATP + H2O = D-methionine(in) + ADP + phosphate + H(+). Its function is as follows. Part of the ABC transporter complex MetNIQ involved in methionine import. Responsible for energy coupling to the transport system. This is Methionine import ATP-binding protein MetN from Chlamydia abortus (strain DSM 27085 / S26/3) (Chlamydophila abortus).